A 450-amino-acid polypeptide reads, in one-letter code: 23S rRNA (uracil(1939)-C(5))-methyltransferase RlmD (450 aa).

The 59-residue stretch at 12–70 (SKQLSAKLSLSVNQLDHLGAGIAQHQGKVVFIPGALPDETVTVQLTEQKKNYARAKLIK) folds into the TRAM domain. Residues Cys-83, Cys-89, Cys-92, and Cys-171 each coordinate [4Fe-4S] cluster. S-adenosyl-L-methionine-binding residues include Gln-283, Phe-312, Asn-317, Glu-333, Asp-360, and Asp-380. The Nucleophile role is filled by Cys-406.

Belongs to the class I-like SAM-binding methyltransferase superfamily. RNA M5U methyltransferase family. RlmD subfamily.

It carries out the reaction uridine(1939) in 23S rRNA + S-adenosyl-L-methionine = 5-methyluridine(1939) in 23S rRNA + S-adenosyl-L-homocysteine + H(+). Its function is as follows. Catalyzes the formation of 5-methyl-uridine at position 1939 (m5U1939) in 23S rRNA. This Shewanella baltica (strain OS223) protein is 23S rRNA (uracil(1939)-C(5))-methyltransferase RlmD.